The following is a 97-amino-acid chain: Putative CC-type chemokine U83 (97 aa).

Disulfide bonds link Cys-32/Cys-62 and Cys-33/Cys-76.

It belongs to the intercrine beta (chemokine CC) family. Highly divergent.

In Homo sapiens (Human), this protein is Putative CC-type chemokine U83 (U83).